The following is a 371-amino-acid chain: MEVSLNDPASNKTSAKSNSSAFFYFESCQSPSLALLLLLIAYTVVLIMGICGNLSLITIIFKKQREAQNVTNILIANLSLSDILVCVMCIPFTAIYTLMDRWIFGNTMCKLTSYVQSVSISVSIFSLVLIAIERYQLIVNPRGWKPSASHAYWGIMLIWLFSLLLSIPLLLSYHLTDEPFRNLSLPTDLYSHHVVCVEHWPSKTNQLLYSTSLIMLQYFVPLGFMFICYLKIVICLHKRNSKIDRRRENESRLTENKRINTMLISIVVTFAACWLPLNTFNVIFDWYHEVLMSCHHDLVFAICHLVAMVSTCINPLFYGFLNRNFQKDLVVLIHHCLCFALRERYENIAISTLHTDESKGSLRVAHIPAGI.

The Extracellular portion of the chain corresponds to 1–31 (MEVSLNDPASNKTSAKSNSSAFFYFESCQSP). N-linked (GlcNAc...) asparagine glycans are attached at residues asparagine 11 and asparagine 18. The chain crosses the membrane as a helical span at residues 32–52 (SLALLLLLIAYTVVLIMGICG). Over 53–72 (NLSLITIIFKKQREAQNVTN) the chain is Cytoplasmic. The chain crosses the membrane as a helical span at residues 73 to 93 (ILIANLSLSDILVCVMCIPFT). Residues 94–111 (AIYTLMDRWIFGNTMCKL) lie on the Extracellular side of the membrane. A disulfide bridge connects residues cysteine 109 and cysteine 196. The chain crosses the membrane as a helical span at residues 112 to 132 (TSYVQSVSISVSIFSLVLIAI). Topologically, residues 133–150 (ERYQLIVNPRGWKPSASH) are cytoplasmic. The helical transmembrane segment at 151–171 (AYWGIMLIWLFSLLLSIPLLL) threads the bilayer. At 172-213 (SYHLTDEPFRNLSLPTDLYSHHVVCVEHWPSKTNQLLYSTSL) the chain is on the extracellular side. Residue asparagine 182 is glycosylated (N-linked (GlcNAc...) asparagine). Residues 214-234 (IMLQYFVPLGFMFICYLKIVI) traverse the membrane as a helical segment. Residues 235–263 (CLHKRNSKIDRRRENESRLTENKRINTML) are Cytoplasmic-facing. The helical transmembrane segment at 264–284 (ISIVVTFAACWLPLNTFNVIF) threads the bilayer. Topologically, residues 285 to 297 (DWYHEVLMSCHHD) are extracellular. A helical transmembrane segment spans residues 298–318 (LVFAICHLVAMVSTCINPLFY). Residues 319–371 (GFLNRNFQKDLVVLIHHCLCFALRERYENIAISTLHTDESKGSLRVAHIPAGI) lie on the Cytoplasmic side of the membrane. Cysteine 336 carries the S-palmitoyl cysteine lipid modification.

Belongs to the G-protein coupled receptor 1 family. Expressed in hippocampus, striatum, hypothalamus, cerebellum, small intestine, colon and adrenal gland.

It is found in the cell membrane. Receptor for neuropeptide Y and peptide YY. The activity of this receptor is mediated by G proteins that inhibit adenylate cyclase activity. This chain is Neuropeptide Y receptor type 6 (NPY6R), found in Oryctolagus cuniculus (Rabbit).